Consider the following 23-residue polypeptide: Acidic phospholipase A2 Ts-A2 (23 aa).

Ca(2+) is required as a cofactor. Contains 7 disulfide bonds. As to expression, expressed by the venom gland.

Its subcellular location is the secreted. It catalyses the reaction a 1,2-diacyl-sn-glycero-3-phosphocholine + H2O = a 1-acyl-sn-glycero-3-phosphocholine + a fatty acid + H(+). Functionally, exhibits moderate hydrolytic activities and prefers the anionic micelles (dPPC with deoxycholate) to the zwitterionic micelles (dPPC with Triton X-100). PLA2 catalyzes the calcium-dependent hydrolysis of the 2-acyl groups in 3-sn-phosphoglycerides. The protein is Acidic phospholipase A2 Ts-A2 of Trimeresurus stejnegeri (Chinese green tree viper).